The sequence spans 378 residues: Ribosomal RNA large subunit methyltransferase G (378 aa).

The protein belongs to the methyltransferase superfamily. RlmG family.

It localises to the cytoplasm. It carries out the reaction guanosine(1835) in 23S rRNA + S-adenosyl-L-methionine = N(2)-methylguanosine(1835) in 23S rRNA + S-adenosyl-L-homocysteine + H(+). Functionally, specifically methylates the guanine in position 1835 (m2G1835) of 23S rRNA. The polypeptide is Ribosomal RNA large subunit methyltransferase G (Salmonella paratyphi B (strain ATCC BAA-1250 / SPB7)).